A 3227-amino-acid polypeptide reads, in one-letter code: MRITKSPPKNQYSQPPPRVAEFIRQAQNEEVTSDLGLVSLCSEFRKNDWPYPRGDLYSWVPVLNRFDAILERIVEHYSLKDKVQTKPFDSDTLSILLEILSFSAHLLSHCANRSIYNSTVYLEYLLNSSVLEVIDSTLALLLHIVQKATISKRGKQLFSLSQDRLFRFLMFLPQDAMKTGFSQNYETLLFSNEIPQEWCSLELSYYKSSPSKDFSSASQPNSEGFSILKLPYNKVLGKPIEELLVKTLHDNQIPEQYSFDLLVSLMLRQNLYDINRRRLMIRIGLLALSNLVYAHSQAVQTRFLIADPEITTHLANLVSPDVDLPQNFKAVCFECFKAFFFKKSMIPSVLASLNVSVSYGLMMNLVRDFSKNLENPNFYYEREYVDSFYDFLQFMTSSPLGGNMACSAGLTSLLGYHLSVKTPQATYVVARSIVMLDHLIDGYSMAFPDFSESKGLDMLVDRVQYELEAGLQDIKSGKGNPEIVLNMDYAISYDRYFLLKNLLKFVLHLIQSGGSVVELRNLIDSSLISSLAFLLEHHEVYGSNLFASTTNIMSTFIHNEPTCYGIIHEKKLSHAFLDAVNRKILNSSDAITSIPLAFGAICLNSQGFDLFLEKNPIPQLFSIFTSLNHCKSLISSDNAAILGTYIDELMRHQPSLKDPIVKMIFKACDQVSALLDNFNPFQYINAKEYPYLLYLETFSSFLENIITNEGHARYLISKGIVSHVLNLIQHPVLAFGFIDSSAFNSFFVLLHHAVDFDAPEVFRPLLDCIITRCEEGITEFTIVSLKQATISLIKDSNMGHEDANNFLHFSIVGNLLTIFAELFSSHAALKKAGNLPLVQLFISPSRYAGIFDILCNIKSIATSLDIHICLGVSDDFVLCSDSLTTIVTDKDEKEKFETKKKELTQDSSFCKFQNIRSNFSQIAYGVSKFFTSLTRALGNTSVQDFNEYKMIHKLGSNIALVVDELINLSSKQITSHPQSLSIASLEASLIFVLGASSIIREDDSKVTLVLLISRLLGGCRTMDVLISLNETVSGFFRLSDRDPLSKSNRVLLALSSTLLNLILVFTSADFMSETSKTLNMALKSEFDMTDFNNSGSKLMHVLHARIFISVLHLWRSADDLHLPYITRALLTNVLSNCYQFEDGIKNVVDSINNLRTSIANGDIKEPLDVVTDDNTNSNFSLEETNASVTDMPESEKHENGIFQAYLLKEMPNDIVSQFEMLKSKQIELTVQMASYEGDLNQNLCDFLYTRDDVQMNADVQFSVTSGLIVEIKKLAQSTDCKAKNQLGPAVGLLSLFISHDFTQNKAKNCVLSELNFFLELLHSLNNGLPSDSHKTSIVCILYLLEVLLADSKKPDEFEFNSEDCSLKLTDGAITVDLASQKHIMSSVITLLSLNSANLGVVVSAFRVVVLLTSASEMIHTFVKLSGLPSLFKAMRACSGFCNESLHIPFISILRRLLEFDEVVELMMFDDLVNIFKLQGRARKTELHGFIRANAEMVLRSPECFIKILKDCCVLGHFTPESEHYYLELKESLPGVLQNGQTDLDPSKEQMSSVIVSFLLDELMDLTETRQFSDRSPNSEFTPENDSLYMYNVFLLQCLTELLSGYNACKRCFLNFQPRRKAPFFNLSRKYNSYLVGFFLEKLLPFGCIRLSENNEVRKAFSVSNWAISILVFLCAYSNEQQTQAVDEIRREVLTSVLKFYKSSSSFSENLEAYYCKLLVLAELCYRLCDAQTVSQKAPNHLLRRSQDQNVKTMIDLGYIPTLTNAISEIDMNYPVSRKVVRHILKPLQLLTKEAIFLSQTNPEALSGAAQDSMGDQSLSSSSEESSDSDREEPPDLYRNSVLGIFQGDIVNENDENYEDSEDDGVYEEMEFEDDQSGSADSVVSEDDADDVMYSDNDDMNIEFMVDEQDASSQNDDSSFDEASSHGDVISIDEEDLDNQGEEFEWEDEDNASSGYEDELDYNEDEVGENDSTTFEAMENAFTETSDNDDHLEEADHVSPVEIDFLENDENSSSEQDDEFQWEWNTETPSGADILSRHGALLRDLFPLPGLSRRVMIINSNDPSRSRPFLNNNASEGLLKHPLLLRNNLIHTPKATELWENLAEIDNHTASGAAFQRLLYYLALEIPNEDSSVLGWTSLKVSKHTDPLRATSDFIPLFSMQRWNSITSMFFAHASGSIALRITGSVLFALVPPALEKYNLENQKKEILENESKEEETRQPEVNIQPEEPINTSDMEGVTTEANEIGSYQEPSLINIRGREVDVSSLGIDPTFLLALPEEMREEVVFQHIQERHMESISDSSRRIDPSFLEVLPSDLRDELLFQEAVQMRLFDHATRNNNSVDHEVEMEEIDQGGTVSEHREKSVKPVKKIPVPNLLDRQGLYSLIRLIFISQHNGKNPYYDLIVNISENKQHRADIVGLLLYILQEASINDRASEKCYRDLTVKSLNNSQQKEVKKSTGLLESLCKVPVVNGISAPALILQQGIDLLSHLATWADHFASFFLSMHDFSGIASKKSAGRKNRESNVYKIAPINVLLGLLAREELFGNTLVMNTFSELLSTLTKPLLSFYKSEKLQKDSATTGYTNDQDSRGSTVPKQDPGTTASRKDKKILSPPNILDENLRLAASLITTDSCSSRTFQNALSVMFHLSSIPKAKILIGKELLRHGQEYGNSITNDLSRLCADVKSGKNESELQVALAPFCPASSNQAKLLRCLKALDYIFERRPKGQEQSPGNIIQLLEFYDNLKFSSLWEVLSECLSALRDHTSITHVSTVLLPLIESLMVICRLVFIELPEDVGKHISPILERFKTLFISFTEEHRKIINMMVFTTPSLMSGSFSLLVKNPKVLEFENKRNYFNRQLHEEAAKEQYPPLNITVRRDHVFLDSYRALHFKDADEVKFSKLNIHFRDEEGVDAGGVTREWLQVLARQMFNPDYALFLPVTGDATTFHPNRDSSVNPDHLSFFKFTGRIIGKALYDGRLLDCHFSRAVYKHMLHRSVSVKDIESLDPDYYKSLVWMLNNDITDIITEEFAVEKDVFGEKTVVDLIPNGRNIPVTELNKQNYVNRMVDYKLRESVKDQLKSLLDGFSDIIPSHLIQIFNEQELELLISGLPEIDIDDWKNNTEYHGYNVSSPQVQWFWRAVRSFDEEERAKLLQFATGTSKVPLNGFKELEGMSGFQRFNIHKSYGSLNRLPQSHTCFNQLDLPEYDTYEQLRSMLLTAINEGSEGFGFA.

Disordered regions lie at residues 1806-1836 (SGAA…PPDL), 1869-1894 (MEFE…VMYS), 1908-1929 (QDAS…GDVI), and 2577-2607 (ATTG…KDKK). Over residues 1811–1823 (DSMGDQSLSSSSE) the composition is skewed to low complexity. The span at 1883-1894 (VSEDDADDVMYS) shows a compositional bias: acidic residues. Positions 2577–2601 (ATTGYTNDQDSRGSTVPKQDPGTTA) are enriched in polar residues. The 337-residue stretch at 2891-3227 (DADEVKFSKL…NEGSEGFGFA (337 aa)) folds into the HECT domain. The active-site Glycyl thioester intermediate is cysteine 3194.

Belongs to the UPL family. TOM1/PTR1 subfamily.

The protein localises to the nucleus. The enzyme catalyses S-ubiquitinyl-[E2 ubiquitin-conjugating enzyme]-L-cysteine + [acceptor protein]-L-lysine = [E2 ubiquitin-conjugating enzyme]-L-cysteine + N(6)-ubiquitinyl-[acceptor protein]-L-lysine.. It functions in the pathway protein modification; protein ubiquitination. Probable ubiquitin ligase protein involved in mRNA export. E3 ubiquitin ligase proteins mediate ubiquitination and subsequent proteasomal degradation of target proteins. Probably participates in mRNA export from the nucleus by regulating the transport of hnRNP proteins such as rae1. The protein is E3 ubiquitin-protein ligase ptr1 (ptr1) of Schizosaccharomyces pombe (strain 972 / ATCC 24843) (Fission yeast).